The chain runs to 597 residues: Arginine--tRNA ligase (597 aa).

The 'HIGH' region motif lies at 138-148 (ANPTGPMHVGH).

It belongs to the class-I aminoacyl-tRNA synthetase family. As to quaternary structure, monomer.

The protein resides in the cytoplasm. The enzyme catalyses tRNA(Arg) + L-arginine + ATP = L-arginyl-tRNA(Arg) + AMP + diphosphate. In Rhodopseudomonas palustris (strain ATCC BAA-98 / CGA009), this protein is Arginine--tRNA ligase.